The sequence spans 529 residues: Cytochrome P450 monooxygenase ausG (529 aa).

The helical transmembrane segment at 31-51 (LLVVCGLPGLLLLFFVTAILL) threads the bilayer. Position 470 (C470) interacts with heme.

This sequence belongs to the cytochrome P450 family. Requires heme as cofactor.

Its subcellular location is the membrane. It functions in the pathway secondary metabolite biosynthesis; terpenoid biosynthesis. Cytochrome P450 monooxygenase; part of the gene cluster that mediates the biosynthesis of calidodehydroaustin, a fungal meroterpenoid. The first step of the pathway is the synthesis of 3,5-dimethylorsellinic acid by the polyketide synthase ausA. 3,5-dimethylorsellinic acid is then prenylated by the polyprenyl transferase ausN. Further epoxidation by the FAD-dependent monooxygenase ausM and cyclization by the probable terpene cyclase ausL lead to the formation of protoaustinoid A. Protoaustinoid A is then oxidized to spiro-lactone preaustinoid A3 by the combined action of the FAD-binding monooxygenases ausB and ausC, and the dioxygenase ausE. Acid-catalyzed keto-rearrangement and ring contraction of the tetraketide portion of preaustinoid A3 by ausJ lead to the formation of preaustinoid A4. The aldo-keto reductase ausK, with the help of ausH, is involved in the next step by transforming preaustinoid A4 into isoaustinone which is in turn hydroxylated by the P450 monooxygenase ausI to form austinolide. The cytochrome P450 monooxygenase ausG modifies austinolide to austinol. Austinol is further acetylated to austin by the O-acetyltransferase ausP, which spontaneously changes to dehydroaustin. The cytochrome P450 monooxygenase ausR then converts dehydroaustin is into 7-dehydrodehydroaustin. The hydroxylation catalyzed by ausR permits the O-acetyltransferase ausQ to add an additional acetyl group to the molecule, leading to the formation of acetoxydehydroaustin. The short chain dehydrogenase ausT catalyzes the reduction of the double bond present between carbon atoms 1 and 2 to convert 7-dehydrodehydroaustin into 1,2-dihydro-7-hydroxydehydroaustin. AusQ catalyzes not only an acetylation reaction but also the addition of the PKS ausV diketide product to 1,2-dihydro-7-hydroxydehydroaustin, forming precalidodehydroaustin. Finally, the iron/alpha-ketoglutarate-dependent dioxygenase converts precalidodehydroaustin into calidodehydroaustin. The protein is Cytochrome P450 monooxygenase ausG of Aspergillus calidoustus.